Consider the following 325-residue polypeptide: MQTSLLKPKIIAVESLGENHAKVVMEPFERGYGHTLGNALRRVLLSSMVGYAPTEVTIAGVVHEYSTLDGVQEDVVNLLLNLKGVVFKLHNRDEVTVTLRKEGEGVVTAGDIELAHDCEVINPDHVIAHLSKGGKLDVQIKVEKGRGYVPGNVRRYGEDTAKIIGRIVLDASFSPVRRVSYAVESARVEQRTDLDKLVMNIETTGVITPEEAIRQSARILVDQLSVFAALEGTETAAEAPSRAPQIDPILLRPVDDLELTVRSANCLKAENIYYIGDLIQRTENELLKTPNLGRKSLNEIKEVLASRGLTLGMKLENWPPAGLDK.

An alpha N-terminal domain (alpha-NTD) region spans residues Met-1 to Glu-231. Positions Ile-246–Lys-325 are alpha C-terminal domain (alpha-CTD).

It belongs to the RNA polymerase alpha chain family. Homodimer. The RNAP catalytic core consists of 2 alpha, 1 beta, 1 beta' and 1 omega subunit. When a sigma factor is associated with the core the holoenzyme is formed, which can initiate transcription.

It carries out the reaction RNA(n) + a ribonucleoside 5'-triphosphate = RNA(n+1) + diphosphate. In terms of biological role, DNA-dependent RNA polymerase catalyzes the transcription of DNA into RNA using the four ribonucleoside triphosphates as substrates. The polypeptide is DNA-directed RNA polymerase subunit alpha (Burkholderia multivorans (strain ATCC 17616 / 249)).